The chain runs to 891 residues: DNA mismatch repair protein MutS (891 aa).

Residue 617 to 624 (GPNMSGKS) coordinates ATP. Positions 805 to 827 (REKIEEEEPKTKDTKRGPSEKVK) are enriched in basic and acidic residues. The tract at residues 805–840 (REKIEEEEPKTKDTKRGPSEKVKNASPTLPRDEKGR) is disordered.

It belongs to the DNA mismatch repair MutS family.

This protein is involved in the repair of mismatches in DNA. It is possible that it carries out the mismatch recognition step. This protein has a weak ATPase activity. The chain is DNA mismatch repair protein MutS from Porphyromonas gingivalis (strain ATCC BAA-308 / W83).